Consider the following 200-residue polypeptide: LHFPL tetraspan subfamily member 6 protein (200 aa).

The N-terminal stretch at 1 to 21 is a signal peptide; the sequence is MASSLTCTGVIWALLSFLCAA. 3 helical membrane passes run 84-104, 123-143, and 166-186; these read ICTIVTGLGCGLLLLVALTAL, GIQFLGGLLIGAGCALYPLGW, and IGWAYYCTGAGATAAMLLCTW.

It belongs to the LHFP family. As to expression, pancreas, kidney, skeletal muscle, liver, lung brain, heart, colon, small intestine, uterus, testis, prostate, thymus, spleen and placenta.

It localises to the membrane. The chain is LHFPL tetraspan subfamily member 6 protein from Homo sapiens (Human).